Here is a 382-residue protein sequence, read N- to C-terminus: Anhydro-N-acetylmuramic acid kinase (382 aa).

Residue 9–16 (GTSLDGID) participates in ATP binding.

It belongs to the anhydro-N-acetylmuramic acid kinase family.

The enzyme catalyses 1,6-anhydro-N-acetyl-beta-muramate + ATP + H2O = N-acetyl-D-muramate 6-phosphate + ADP + H(+). Its pathway is amino-sugar metabolism; 1,6-anhydro-N-acetylmuramate degradation. The protein operates within cell wall biogenesis; peptidoglycan recycling. Functionally, catalyzes the specific phosphorylation of 1,6-anhydro-N-acetylmuramic acid (anhMurNAc) with the simultaneous cleavage of the 1,6-anhydro ring, generating MurNAc-6-P. Is required for the utilization of anhMurNAc either imported from the medium or derived from its own cell wall murein, and thus plays a role in cell wall recycling. The polypeptide is Anhydro-N-acetylmuramic acid kinase (Bacillus cereus (strain Q1)).